We begin with the raw amino-acid sequence, 425 residues long: Testicular acid phosphatase (425 aa).

The N-terminal stretch at 1 to 27 (MAEPGSQGHTVGPLLLLLLLLLPRALP) is a signal peptide. Residues 28-392 (EGPLLFVALV…EPASPPATVP (365 aa)) lie on the Extracellular side of the membrane. The active-site Nucleophile is His-40. 3 cysteine pairs are disulfide-bonded: Cys-158–Cys-378, Cys-213–Cys-311, and Cys-353–Cys-357. The active-site Proton donor is the Asp-288. The chain crosses the membrane as a helical span at residues 393-413 (LLAGAVAVLAVLSLGLGLLAW). At 414–425 (RPRCLRALGGTV) the chain is on the cytoplasmic side.

This sequence belongs to the histidine acid phosphatase family. Homodimer. Glycosylated.

It is found in the membrane. The catalysed reaction is a phosphate monoester + H2O = an alcohol + phosphate. In terms of biological role, may dephosphorylate receptor tyrosine-protein kinase ERBB4 and inhibits its ligand-induced proteolytic cleavage. May play a role in odontogenesis. This is Testicular acid phosphatase from Mus musculus (Mouse).